We begin with the raw amino-acid sequence, 209 residues long: Small ribosomal subunit protein uS4 (209 aa).

In terms of domain architecture, S4 RNA-binding spans 99 to 164 (GRLDSVVYRM…QLRVKAALEA (66 aa)).

This sequence belongs to the universal ribosomal protein uS4 family. In terms of assembly, part of the 30S ribosomal subunit. Contacts protein S5. The interaction surface between S4 and S5 is involved in control of translational fidelity.

One of the primary rRNA binding proteins, it binds directly to 16S rRNA where it nucleates assembly of the body of the 30S subunit. In terms of biological role, with S5 and S12 plays an important role in translational accuracy. The polypeptide is Small ribosomal subunit protein uS4 (Aromatoleum aromaticum (strain DSM 19018 / LMG 30748 / EbN1) (Azoarcus sp. (strain EbN1))).